A 291-amino-acid polypeptide reads, in one-letter code: Zinc transporter ZupT (291 aa).

8 consecutive transmembrane segments (helical) span residues 8–28, 39–59, 74–94, 147–167, 174–194, 209–229, 233–253, and 271–291; these read IFIA…GSII, VLSL…FMEI, HWAE…SLLI, GIFT…ATFI, TLGI…GLAV, FIYS…GALI, FIGD…MVFI, and SLYG…LLGQ. Residues asparagine 158 and glutamate 161 each contribute to the Fe(2+) site. Zn(2+)-binding residues include glutamate 161 and histidine 186. Asparagine 187, glutamate 190, and glutamate 219 together coordinate Fe(2+). Glutamate 190 provides a ligand contact to Zn(2+).

The protein belongs to the ZIP transporter (TC 2.A.5) family. ZupT subfamily.

Its subcellular location is the cell inner membrane. It catalyses the reaction Zn(2+)(in) = Zn(2+)(out). Functionally, mediates zinc uptake. May also transport other divalent cations. This Campylobacter jejuni subsp. jejuni serotype O:2 (strain ATCC 700819 / NCTC 11168) protein is Zinc transporter ZupT.